Consider the following 843-residue polypeptide: Glycogen phosphorylase, brain form (843 aa).

Ala-2 carries the N-acetylalanine modification. Ser-15 carries the post-translational modification Phosphoserine; by PHK; in form phosphorylase A. 3 residues coordinate AMP: Asp-43, Tyr-197, and Arg-310. The residue at position 197 (Tyr-197) is a Phosphotyrosine. Tyr-473 bears the Phosphotyrosine mark. Lys-569 contributes to the pyridoxal 5'-phosphate binding site. The segment at 677–678 (TG) is pyridoxal 5'-phosphate. N6-(pyridoxal phosphate)lysine is present on Lys-681.

It belongs to the glycogen phosphorylase family. As to quaternary structure, homodimer. Dimers associate into a tetramer to form the enzymatically active phosphorylase A. The cofactor is pyridoxal 5'-phosphate. Phosphorylation of Ser-15 converts phosphorylase B (unphosphorylated) to phosphorylase A.

The catalysed reaction is [(1-&gt;4)-alpha-D-glucosyl](n) + phosphate = [(1-&gt;4)-alpha-D-glucosyl](n-1) + alpha-D-glucose 1-phosphate. Activity of phosphorylase is controlled both by allosteric means (through the non-covalent binding of metabolites) and by covalent modification. Thus AMP allosterically activates, whereas ATP, ADP, and glucose-6-phosphate allosterically inhibit, phosphorylase B. In terms of biological role, glycogen phosphorylase that regulates glycogen mobilization. Phosphorylase is an important allosteric enzyme in carbohydrate metabolism. Enzymes from different sources differ in their regulatory mechanisms and in their natural substrates. However, all known phosphorylases share catalytic and structural properties. This Bos taurus (Bovine) protein is Glycogen phosphorylase, brain form (PYGB).